The primary structure comprises 705 residues: Polyribonucleotide nucleotidyltransferase (705 aa).

The Mg(2+) site is built by D485 and D491. Residues P552–I611 enclose the KH domain. The S1 motif domain maps to G621–K689.

Belongs to the polyribonucleotide nucleotidyltransferase family. Mg(2+) is required as a cofactor.

Its subcellular location is the cytoplasm. It catalyses the reaction RNA(n+1) + phosphate = RNA(n) + a ribonucleoside 5'-diphosphate. In terms of biological role, involved in mRNA degradation. Catalyzes the phosphorolysis of single-stranded polyribonucleotides processively in the 3'- to 5'-direction. In Clostridium novyi (strain NT), this protein is Polyribonucleotide nucleotidyltransferase.